Consider the following 330-residue polypeptide: DNA-directed RNA polymerase subunit alpha (330 aa).

Positions 1-232 (MAILAFQKPD…YHFMLFSDEK (232 aa)) are alpha N-terminal domain (alpha-NTD). The tract at residues 248–330 (EEVLHMRQLL…DISKYKLDKE (83 aa)) is alpha C-terminal domain (alpha-CTD).

The protein belongs to the RNA polymerase alpha chain family. In terms of assembly, homodimer. The RNAP catalytic core consists of 2 alpha, 1 beta, 1 beta' and 1 omega subunit. When a sigma factor is associated with the core the holoenzyme is formed, which can initiate transcription.

The enzyme catalyses RNA(n) + a ribonucleoside 5'-triphosphate = RNA(n+1) + diphosphate. Functionally, DNA-dependent RNA polymerase catalyzes the transcription of DNA into RNA using the four ribonucleoside triphosphates as substrates. This chain is DNA-directed RNA polymerase subunit alpha, found in Bacteroides fragilis (strain ATCC 25285 / DSM 2151 / CCUG 4856 / JCM 11019 / LMG 10263 / NCTC 9343 / Onslow / VPI 2553 / EN-2).